The primary structure comprises 436 residues: GTPase Der (436 aa).

2 EngA-type G domains span residues 4 to 167 (PVVA…PKVE) and 176 to 351 (IRFC…ESHN). GTP contacts are provided by residues 10-17 (GRPNVGKS), 57-61 (DTGGI), 119-122 (NKVD), 182-189 (GRPNVGKS), 229-233 (DTAGM), and 294-297 (NKWD). Residues 352–436 (IRVQTNVLND…PIRIIARARD (85 aa)) enclose the KH-like domain.

Belongs to the TRAFAC class TrmE-Era-EngA-EngB-Septin-like GTPase superfamily. EngA (Der) GTPase family. In terms of assembly, associates with the 50S ribosomal subunit.

Its function is as follows. GTPase that plays an essential role in the late steps of ribosome biogenesis. In Bacillus cytotoxicus (strain DSM 22905 / CIP 110041 / 391-98 / NVH 391-98), this protein is GTPase Der.